The primary structure comprises 100 residues: Apolipoprotein C-II (100 aa).

The signal sequence occupies residues 1–22 (MGTRFLLALFLVLLVLGFEVQG). The interval 66 to 74 (TVDEKLRDM) is lipid binding. A lipoprotein lipase cofactor region spans residues 78–100 (STAAVSTYAGIFTDQLLTLLKGD).

This sequence belongs to the apolipoprotein C2 family. Proapolipoprotein C-II is synthesized as a sialic acid containing glycoprotein which is subsequently desialylated prior to its proteolytic processing. Post-translationally, proapolipoprotein C-II, the major form found in plasma undergoes proteolytic cleavage of its N-terminal hexapeptide to generate apolipoprotein C-II, which occurs as the minor form in plasma.

It localises to the secreted. Functionally, component of chylomicrons, very low-density lipoproteins (VLDL), low-density lipoproteins (LDL), and high-density lipoproteins (HDL) in plasma. Plays an important role in lipoprotein metabolism as an activator of lipoprotein lipase. Both proapolipoprotein C-II and apolipoprotein C-II can activate lipoprotein lipase. The chain is Apolipoprotein C-II (APOC2) from Otolemur garnettii (Small-eared galago).